A 67-amino-acid polypeptide reads, in one-letter code: Conotoxin TsMMSK-011 (67 aa).

The N-terminal stretch at 1 to 20 (MMSKLGVLLTICLLLFPLTA) is a signal peptide. Positions 21 to 50 (VQLDGDQPADLPALRTQDIATDHSPWFDPV) are excised as a propeptide. Cystine bridges form between Cys53/Cys65, Cys54/Cys61, and Cys58/Cys64. The residue at position 63 (Pro63) is a 4-hydroxyproline.

This sequence belongs to the conotoxin M superfamily. Expressed by the venom duct.

Its subcellular location is the secreted. This is Conotoxin TsMMSK-011 from Conus tessulatus (Tessellate cone).